We begin with the raw amino-acid sequence, 43 residues long: Snaclec lebecetin subunit beta (43 aa).

Residues 1–43 form the C-type lectin domain; the sequence is ALNCASGWSGGYDQHCYKVFDIPPSWAADEKFCKQQTSGGHLV. An intrachain disulfide couples C4 to C16.

In terms of assembly, heterodimer of subunits alpha and beta; disulfide-linked. Ca(2+) is required as a cofactor. In terms of processing, glycosylated. Expressed by the venom gland.

The protein resides in the secreted. Its function is as follows. Binds to the platelet GPIb/IX/V receptor system and inhibits ristocetin-induced platelet aggregation in human platelet-rich plasma. Strongly inhibits platelet aggregation induced by ADP, calcium ionophore, thrombin and collagen. Does not inhibit U46619-induced platelet aggregation. The protein is Snaclec lebecetin subunit beta of Macrovipera lebetinus (Levantine viper).